The primary structure comprises 2167 residues: RNA editing associated helicase 2 (2167 aa).

Residues 1–30 (MRAIRLTVACRYLGPFRSVTLSPVVLPVRL) constitute a mitochondrion transit peptide. Disordered regions lie at residues 503-593 (RARG…DEAT) and 937-969 (ENATKPPHTPTPLPLTLGTTQEKPQYPTPPTNV). Residues 532 to 541 (SSTQTPSSST) show a composition bias toward low complexity. The 72-residue stretch at 1024 to 1095 (DAKTVLQRYC…AMHALALLRR (72 aa)) folds into the DRBM domain. The Helicase ATP-binding domain maps to 1348–1513 (LRAISSNQIV…FGNAPIINVE (166 aa)). 1361-1368 (GTTGCGKT) contributes to the ATP binding site. An Important for binding to gRNA motif is present at residues 1366–1367 (GK). Positions 1460-1463 (DEIH) match the DEAH box motif. The Helicase C-terminal domain maps to 1585-1762 (AIDHAVRSLD…SLCLQILALD (178 aa)). The segment at 2132 to 2167 (IIEPCTEPKGGSSEAEKTHVNSSHTPTTSAEAGGDS) is disordered. Residues 2151–2161 (VNSSHTPTTSA) show a composition bias toward polar residues.

The protein belongs to the DEAD box helicase family. DEAH subfamily. Component of the REH2-associated complex (REH2C) composed of helicase REH2, associated factors H2F1 and H2F2, and mRNAs at various editing stages; the formation of the complex is RNA-independent. Within the complex, interacts with H2F1; the interaction is direct. Interacts transiently, in a RNA-dependent manner, with various editing complexes including the RNA editing core (RECC) complex, the gRNA-binding (GRBC) complex (also known as the MRB1 complex) and the RNA editing mediator (REMC) complex. Interacts with GAP1/GRBC2 via RNA forming a variant of the GRBC complex known as REH2-GRBC complex. Interacts with mitochondrial ribosomes.

The protein localises to the mitochondrion. The enzyme catalyses ATP + H2O = ADP + phosphate + H(+). Its function is as follows. ATP-dependent RNA helicase that unwinds RNA in a 3' to 5' direction and that plays an important role in mitochondrial mRNA editing, a process involving the addition and deletion of uridine (U) nucleotides in the pre-mRNA. As part of the RET2-containing gRNA-binding (RET2-GRBC) complex, acts as a scaffold for the assembly of mRNA-gRNA hybrids and the recruitment of the RNA editing core (RECC) complex. Regulates several steps of mRNA editing by the MRBC3010/GRBC6 containing gRNA-binding (MRBC3010-GRBC) complex including loading of unedited mRNA, editing in the first sequence block and subsequent editing progression across multiple sequence blocks. Also, regulates the RNA substrate content of the MRBC3010-GRBC complex as well as the association of this complex with mitoribosomes. The polypeptide is RNA editing associated helicase 2 (Trypanosoma brucei brucei (strain 927/4 GUTat10.1)).